A 430-amino-acid polypeptide reads, in one-letter code: SH3 domain-containing protein PJ696.02 (430 aa).

The segment at 237–372 is disordered; sequence EPEDIWGPSS…KPKFKQDSLG (136 aa). Residues 263 to 277 are compositionally biased toward basic and acidic residues; it reads RRGDSYRSNRSRAHD. The residue at position 285 (Ser-285) is a Phosphoserine. The span at 304–313 shows a compositional bias: basic and acidic residues; sequence SKMDNRRSKY. Phosphothreonine is present on Thr-316. 2 positions are modified to phosphoserine: Ser-318 and Ser-324. The residue at position 325 (Tyr-325) is a Phosphotyrosine. A phosphoserine mark is found at Ser-326, Ser-354, and Ser-406. A compositionally biased stretch (low complexity) spans 333–358; sequence VYSSDVSTESSSQFSSRSSEYSKPSR. Residues 371 to 430 form the SH3 domain; the sequence is LGPNQARAMYSFAGEQPGDLSFQKGDIIDIVERSGSHDDWWTGRIGYREGIFPANYVKLS.

This sequence belongs to the SH3YL1 family.

This Schizosaccharomyces pombe (strain 972 / ATCC 24843) (Fission yeast) protein is SH3 domain-containing protein PJ696.02.